Consider the following 1738-residue polypeptide: Sodium leak channel NALCN (1738 aa).

Topologically, residues Met-1 to Pro-36 are cytoplasmic. A helical membrane pass occupies residues Trp-37–Thr-57. Over Pro-58 to Pro-65 the chain is Extracellular. A helical transmembrane segment spans residues Pro-66–Met-90. Over His-91–Arg-106 the chain is Cytoplasmic. Residues Trp-107–Ile-129 form a helical membrane-spanning segment. Residues Ala-130 to Ser-137 lie on the Extracellular side of the membrane. Residues Pro-138–Phe-158 form a helical; Voltage-sensor membrane-spanning segment. Residues Arg-159–Arg-173 are Cytoplasmic-facing. Residues Ser-174 to Met-199 form a helical membrane-spanning segment. Residues Phe-200–Ser-269 are Extracellular-facing. 2 disulfides stabilise this stretch: Cys-207–Cys-239 and Cys-229–Cys-245. Residues Asn-210 and Asn-216 are each glycosylated (N-linked (GlcNAc...) asparagine). Residues Ile-270–Ala-289 constitute an intramembrane region (pore-forming). The Extracellular portion of the chain corresponds to Ile-290–Pro-294. Residues Arg-295–Ile-322 form a helical membrane-spanning segment. The Cytoplasmic segment spans residues Glu-323–Arg-382. Residues Ser-383–Ser-403 form a helical membrane-spanning segment. Topologically, residues Asn-404–Asp-416 are extracellular. A helical transmembrane segment spans residues Glu-417–Cys-439. The Cytoplasmic portion of the chain corresponds to Leu-440 to Ser-447. A helical membrane pass occupies residues Ser-448–Asp-468. The Extracellular segment spans residues Leu-469–Ser-472. The chain crosses the membrane as a helical; Voltage-sensor span at residues Gln-473–Leu-492. The Cytoplasmic portion of the chain corresponds to Glu-493–Pro-502. A helical membrane pass occupies residues Gly-503 to Phe-530. Residues Val-531–Ala-543 are Extracellular-facing. Residues Phe-544–Thr-563 constitute an intramembrane region (pore-forming). Residues Leu-564 to His-569 lie on the Extracellular side of the membrane. The helical transmembrane segment at Met-570–Leu-599 threads the bilayer. Residues Asp-600–Thr-886 lie on the Cytoplasmic side of the membrane. The interval Gln-762–Leu-785 is disordered. A coiled-coil region spans residues Tyr-795 to His-830. Residues Tyr-887 to Glu-906 form a helical membrane-spanning segment. Over Ser-907–Ala-915 the chain is Extracellular. The helical transmembrane segment at Pro-916 to Ala-939 threads the bilayer. The Cytoplasmic segment spans residues Asp-940 to Thr-947. A helical membrane pass occupies residues Ala-948–Met-972. Topologically, residues Pro-973 to Ser-980 are extracellular. A helical; Voltage-sensor transmembrane segment spans residues Gly-981 to Met-1003. At Arg-1004–Lys-1015 the chain is on the cytoplasmic side. The helical transmembrane segment at Glu-1016–Phe-1039 threads the bilayer. Over Ala-1040–Ala-1104 the chain is Extracellular. Cysteines 1046 and 1057 form a disulfide. Asn-1064 carries N-linked (GlcNAc...) asparagine glycosylation. The pore-forming intramembrane region spans Met-1105–Ile-1124. Topologically, residues Ile-1125–Gly-1129 are extracellular. Residues Pro-1130–Phe-1159 traverse the membrane as a helical segment. The Cytoplasmic segment spans residues Asn-1160–Pro-1210. Residues Phe-1211–Leu-1227 form a helical membrane-spanning segment. At Ser-1228–Pro-1236 the chain is on the extracellular side. Residues Val-1237 to Ile-1260 traverse the membrane as a helical segment. At Ile-1261–Ser-1271 the chain is on the cytoplasmic side. A helical transmembrane segment spans residues Arg-1272 to Ala-1293. The Extracellular segment spans residues Leu-1294 to Asn-1296. Residues Ala-1297 to His-1318 form a helical; Voltage-sensor membrane-spanning segment. Topologically, residues Val-1319–Ser-1331 are cytoplasmic. The chain crosses the membrane as a helical span at residues Met-1332 to Phe-1357. The Extracellular portion of the chain corresponds to Gly-1358–Ala-1378. An intramembrane region (pore-forming) is located at residues Ile-1379 to Cys-1398. The Extracellular portion of the chain corresponds to Met-1399 to Tyr-1420. A disulfide bridge links Cys-1405 with Cys-1417. Residues Ala-1421–Val-1447 form a helical membrane-spanning segment. Over Glu-1448–Ile-1738 the chain is Cytoplasmic. The tract at residues Pro-1611–Pro-1678 is disordered. Residues Ser-1613 to Met-1632 show a composition bias toward polar residues. Low complexity predominate over residues Gln-1633–Ser-1648.

It belongs to the NALCN family. As to quaternary structure, found in a complex with NALCN, UNC79, UNC80 and NACL1; these auxiliary subunits are indispensable for the function of NALCN channel. Interacts with UNC80; required for the NALCN activation/inhibition by GPCRs in neurons. Found in a complex with NALCN, UNC79 and UNC80; UNC80 bridges NALCN to UNC79. Interacts with CHRM3. Post-translationally, phosphorylated on tyrosine residues.

Its subcellular location is the cell membrane. The enzyme catalyses Na(+)(in) = Na(+)(out). Its activity is regulated as follows. Inhibited by low micromolar concentrations of Gd(3+) and high micromolar concentrations of verapamil. Insensitive to tetrodotoxin (TTX) and potentiated by low external Ca(2+) concentration. Its function is as follows. Voltage-gated ion channel responsible for the resting Na(+) permeability that controls neuronal excitability. NALCN channel functions as a multi-protein complex, which consists at least of NALCN, NALF1, UNC79 and UNC80. NALCN is the voltage-sensing, pore-forming subunit of the NALCN channel complex. NALCN channel complex is constitutively active and conducts monovalent cations but is blocked by physiological concentrations of extracellular divalent cations. In addition to its role in regulating neuronal excitability, is required for normal respiratory rhythm, systemic osmoregulation by controlling the serum sodium concentration and in the regulation of the intestinal pace-making activity in the interstitial cells of Cajal. NALCN channel is also activated by neuropeptides such as neurotensin and substance P (SP) through a SRC family kinases-dependent pathway. In addition, NALCN activity is enhanced/modulated by several GPCRs, such as CHRM3. The sequence is that of Sodium leak channel NALCN from Homo sapiens (Human).